A 373-amino-acid chain; its full sequence is Centrosomal protein of 41 kDa (373 aa).

The interval 89-137 (QRLEDNDSAASDPDAETTARTNGKGNPGEQSPSPEQFINNAGAGDSSRS) is disordered. Phosphoserine is present on residues Ser-96 and Ser-99. A compositionally biased stretch (polar residues) spans 106–127 (TARTNGKGNPGEQSPSPEQFIN). Thr-109 carries the post-translational modification Phosphothreonine. A Phosphoserine modification is found at Ser-121. Residues 169-266 (PDCPFLLLDV…LAQKFPEGLI (98 aa)) form the Rhodanese domain. The disordered stretch occupies residues 275-373 (QQALPPGSAR…SGHLQGKPWK (99 aa)). Residues 298–312 (NKWRFTPEDLKKIEY) are compositionally biased toward basic and acidic residues. Arg-343 carries the post-translational modification Omega-N-methylarginine. The segment covering 355–366 (SHSNPRSLSSGH) has biased composition (polar residues).

The protein belongs to the CEP41 family. Found in a complex with TTLL6. Expressed in testis and fetal tissues.

It is found in the cytoplasm. It localises to the cytoskeleton. The protein localises to the microtubule organizing center. Its subcellular location is the centrosome. The protein resides in the cell projection. It is found in the cilium. It localises to the cilium basal body. In terms of biological role, required during ciliogenesis for tubulin glutamylation in cilium. Probably acts by participating in the transport of TTLL6, a tubulin polyglutamylase, between the basal body and the cilium. The sequence is that of Centrosomal protein of 41 kDa (CEP41) from Homo sapiens (Human).